A 163-amino-acid polypeptide reads, in one-letter code: Urease accessory protein UreE (163 aa).

Residues 144–163 (QPEPGAYGGSSAGSHDGHHH) are disordered.

This sequence belongs to the UreE family.

It is found in the cytoplasm. Its function is as follows. Involved in urease metallocenter assembly. Binds nickel. Probably functions as a nickel donor during metallocenter assembly. In Aliivibrio fischeri (strain ATCC 700601 / ES114) (Vibrio fischeri), this protein is Urease accessory protein UreE.